The primary structure comprises 340 residues: Phosphoribosylformylglycinamidine cyclo-ligase (340 aa).

Belongs to the AIR synthase family.

It is found in the cytoplasm. It catalyses the reaction 2-formamido-N(1)-(5-O-phospho-beta-D-ribosyl)acetamidine + ATP = 5-amino-1-(5-phospho-beta-D-ribosyl)imidazole + ADP + phosphate + H(+). The protein operates within purine metabolism; IMP biosynthesis via de novo pathway; 5-amino-1-(5-phospho-D-ribosyl)imidazole from N(2)-formyl-N(1)-(5-phospho-D-ribosyl)glycinamide: step 2/2. The polypeptide is Phosphoribosylformylglycinamidine cyclo-ligase (Streptococcus pyogenes serotype M28 (strain MGAS6180)).